A 237-amino-acid polypeptide reads, in one-letter code: 2,3-bisphosphoglycerate-dependent phosphoglycerate mutase (237 aa).

Substrate-binding positions include 8–15 (RHGQSAWN), 21–22 (TG), R60, 87–90 (ERHY), K98, 114–115 (RR), and 180–181 (GN). Catalysis depends on H9, which acts as the Tele-phosphohistidine intermediate. The Proton donor/acceptor role is filled by E87.

This sequence belongs to the phosphoglycerate mutase family. BPG-dependent PGAM subfamily. Homodimer.

It carries out the reaction (2R)-2-phosphoglycerate = (2R)-3-phosphoglycerate. Its pathway is carbohydrate degradation; glycolysis; pyruvate from D-glyceraldehyde 3-phosphate: step 3/5. In terms of biological role, catalyzes the interconversion of 2-phosphoglycerate and 3-phosphoglycerate. This is 2,3-bisphosphoglycerate-dependent phosphoglycerate mutase from Hyphomonas neptunium (strain ATCC 15444).